The primary structure comprises 430 residues: MKKIHIKTYGCQMNENDSEVAKFYLEEEGYEITNNENDADIVILNTCVVRKKSEDKFYSHIGELKKQNKIIGIMGCGAEKEKEKLFKRGVKFVIGTRAIPLIPQAVERAINGKKSAIFEDKMDEIDYKKILKRNSKHHAWITIIYGCNRFCTYCIVPYTRGREKSRKMDDIINEVENLAKSGIKEVTYLGQNVDAYGKDLNDGSSLAKLLNLTKDIEEIERIWFLTSYPTDFSLDIAHEVANSSKITKNIHLPVQHGSNKILKKMNRRYTIEEYIELINDIRKIVPDASISSDIIVGFPDETEEDFEKTVELVKNIKFERLNLAIYSPREGTIAWKYFEDNVPRIIKTKRMAYILNLQKEINKQLNENYLNKTVEIIVETKAKSGLYYGRDIRNKIIAFEGDKSLIGKKVLVKVKKTTAGPLYGDIIKIL.

Residues 2–111 (KKIHIKTYGC…IPQAVERAIN (110 aa)) enclose the MTTase N-terminal domain. [4Fe-4S] cluster is bound by residues Cys11, Cys47, Cys76, Cys147, Cys151, and Cys154. One can recognise a Radical SAM core domain in the interval 133 to 364 (RNSKHHAWIT…LNLQKEINKQ (232 aa)). The region spanning 367-428 (ENYLNKTVEI…AGPLYGDIIK (62 aa)) is the TRAM domain.

Belongs to the methylthiotransferase family. MiaB subfamily. As to quaternary structure, monomer. Requires [4Fe-4S] cluster as cofactor.

It is found in the cytoplasm. It catalyses the reaction N(6)-dimethylallyladenosine(37) in tRNA + (sulfur carrier)-SH + AH2 + 2 S-adenosyl-L-methionine = 2-methylsulfanyl-N(6)-dimethylallyladenosine(37) in tRNA + (sulfur carrier)-H + 5'-deoxyadenosine + L-methionine + A + S-adenosyl-L-homocysteine + 2 H(+). Functionally, catalyzes the methylthiolation of N6-(dimethylallyl)adenosine (i(6)A), leading to the formation of 2-methylthio-N6-(dimethylallyl)adenosine (ms(2)i(6)A) at position 37 in tRNAs that read codons beginning with uridine. This chain is tRNA-2-methylthio-N(6)-dimethylallyladenosine synthase, found in Thermosipho melanesiensis (strain DSM 12029 / CIP 104789 / BI429).